A 22-amino-acid polypeptide reads, in one-letter code: Caerin-3.2 (22 aa).

Lysine 22 carries the post-translational modification Lysine amide.

In terms of tissue distribution, expressed by the skin parotoid and/or rostral glands.

The protein resides in the secreted. Its function is as follows. Antibacterial peptide, that adopts an alpha helical conformation which can disrupt bacterial membranes. Each caerin displays a different antimicrobial specificity. The sequence is that of Caerin-3.2 from Ranoidea caerulea (Green tree frog).